We begin with the raw amino-acid sequence, 443 residues long: uncharacterized protein (443 aa).

Active-site proton acceptor residues include H164 and D386.

The protein belongs to the plant acyltransferase family.

This is an uncharacterized protein from Arabidopsis thaliana (Mouse-ear cress).